Consider the following 84-residue polypeptide: Small ribosomal subunit protein bS18 (84 aa).

The protein belongs to the bacterial ribosomal protein bS18 family. Part of the 30S ribosomal subunit. Forms a tight heterodimer with protein bS6.

Its function is as follows. Binds as a heterodimer with protein bS6 to the central domain of the 16S rRNA, where it helps stabilize the platform of the 30S subunit. The polypeptide is Small ribosomal subunit protein bS18 (Dictyoglomus turgidum (strain DSM 6724 / Z-1310)).